We begin with the raw amino-acid sequence, 563 residues long: Serine carboxypeptidase S10 family member 2 (563 aa).

Positions 1–23 are cleaved as a signal peptide; it reads MNIKIILLSIILIIQLLLLNNNG. The Extracellular portion of the chain corresponds to 24–529; it reads GIVESKINFS…VPLTLGAWIG (506 aa). N-linked (GlcNAc...) asparagine glycosylation is found at Asn-31, Asn-95, Asn-110, and Asn-213. The active site involves Ser-225. N-linked (GlcNAc...) asparagine glycans are attached at residues Asn-244, Asn-328, and Asn-382. Residue Asp-417 is part of the active site. Asn-468 is a glycosylation site (N-linked (GlcNAc...) asparagine). Residue His-479 is part of the active site. Asn-499 is a glycosylation site (N-linked (GlcNAc...) asparagine). Residues 530 to 550 form a helical membrane-spanning segment; sequence ITVGGCAFGFLVGGLIIYIIM. Over 551–563 the chain is Cytoplasmic; that stretch reads KKSSKNGYYKVIQ.

This sequence belongs to the peptidase S10 family.

It localises to the membrane. In terms of biological role, probable carboxypeptidase. This is Serine carboxypeptidase S10 family member 2 from Dictyostelium discoideum (Social amoeba).